The sequence spans 179 residues: Small ribosomal subunit protein uS7 (179 aa).

This sequence belongs to the universal ribosomal protein uS7 family. As to quaternary structure, part of the 30S ribosomal subunit. Contacts proteins S9 and S11.

One of the primary rRNA binding proteins, it binds directly to 16S rRNA where it nucleates assembly of the head domain of the 30S subunit. Is located at the subunit interface close to the decoding center, probably blocks exit of the E-site tRNA. The polypeptide is Small ribosomal subunit protein uS7 (Shigella flexneri serotype 5b (strain 8401)).